We begin with the raw amino-acid sequence, 190 residues long: Small ribosomal subunit protein uS5 (190 aa).

Residues 19–82 (IIDKLVTINR…ERAKRSMIRV (64 aa)) form the S5 DRBM domain. A disordered region spans residues 161–190 (SVASRRGKKVSDILGRREPVAGQEGEEAHA). The segment covering 169–179 (KVSDILGRREP) has biased composition (basic and acidic residues).

The protein belongs to the universal ribosomal protein uS5 family. As to quaternary structure, part of the 30S ribosomal subunit. Contacts proteins S4 and S8.

Its function is as follows. With S4 and S12 plays an important role in translational accuracy. Functionally, located at the back of the 30S subunit body where it stabilizes the conformation of the head with respect to the body. This is Small ribosomal subunit protein uS5 from Granulibacter bethesdensis (strain ATCC BAA-1260 / CGDNIH1).